The chain runs to 964 residues: Probable LRR receptor-like serine/threonine-protein kinase IRK (964 aa).

A signal peptide spans 1–20 (MYKALIFTVLLVSAVAPVRS). Residues 21-603 (LDPPLNDDVL…GHKRILLSIS (583 aa)) lie on the Extracellular side of the membrane. LRR repeat units follow at residues 92-116 (LQFL…MLLS), 117-141 (LVNL…FFRQ), 143-166 (GSLR…ISSC), 168-190 (SLAA…IWSL), 191-214 (NTLR…IDRL), 215-238 (NNLR…IGSC), 240-261 (LLKT…TFQQ), 263-286 (SLCY…IGEM), 287-310 (RSLE…IGNL), 312-334 (ALKV…TANC), and 335-358 (INLL…LFQD). Asn-104 carries N-linked (GlcNAc...) asparagine glycosylation. Asn-173 is a glycosylation site (N-linked (GlcNAc...) asparagine). N-linked (GlcNAc...) asparagine glycosylation is present at Asn-317. Residue Asn-370 is glycosylated (N-linked (GlcNAc...) asparagine). LRR repeat units lie at residues 375–399 (IKKI…LGDL), 400–423 (RDLE…IGEL), 425–447 (HLSV…TGGA), 448–471 (VSLE…IKNC), 472–495 (SSLR…LAKL), 496–519 (TRLE…LANL), and 521–544 (YLHT…IFNG). Residue Asn-470 is glycosylated (N-linked (GlcNAc...) asparagine). 3 N-linked (GlcNAc...) asparagine glycosylation sites follow: Asn-526, Asn-562, and Asn-578. Residues 604–624 (SLIAISAAAAIVVGVIAITVL) traverse the membrane as a helical segment. The Cytoplasmic segment spans residues 625 to 964 (NLRVRASTVS…SGSSDELGSS (340 aa)). One can recognise a Protein kinase domain in the interval 678 to 951 (LNKDCELGRG…GEAVNILRMI (274 aa)). Residues 684–692 (LGRGGFGAV) and Lys-706 each bind ATP.

This sequence belongs to the protein kinase superfamily. Ser/Thr protein kinase family. In terms of assembly, interacts with IRKI. Post-translationally, autophosphorylated. Highly expressed in root tips, shoot apices and developing flowers.

It is found in the cell membrane. It carries out the reaction L-seryl-[protein] + ATP = O-phospho-L-seryl-[protein] + ADP + H(+). The enzyme catalyses L-threonyl-[protein] + ATP = O-phospho-L-threonyl-[protein] + ADP + H(+). The chain is Probable LRR receptor-like serine/threonine-protein kinase IRK from Arabidopsis thaliana (Mouse-ear cress).